The chain runs to 223 residues: uncharacterized protein (223 aa).

The next 4 membrane-spanning stretches (helical) occupy residues 22–42 (LTVG…FVVV), 59–79 (GVAL…ATLI), 85–105 (IFSL…WCSM), and 164–184 (MAWA…SQAF).

The protein belongs to the Rht family.

It localises to the cell membrane. This is an uncharacterized protein from Escherichia coli (strain K12).